Reading from the N-terminus, the 950-residue chain is Serine/threonine-protein phosphatase 4 regulatory subunit 1 (950 aa).

HEAT repeat units follow at residues 1–25 (MADLSLLQEDLQEDADGFGVDDYSS), 26–63 (ESDVIIIPSALDFVSQDEMLTPLGRLDKYAASENIFNR), 65–81 (MVARSLLDTLREVCDDE), 82–119 (RDCIAVLERISRLADDSEPTVRAELMEQVPHIALFCQE), 127–164 (AFSKFLLPIVVRYLADQNNQVRKTSQAALLALLEQELI), 168–206 (DVETKVCPVLIELTAPDSNDDVKTEAVAIMCKMAPMVGK), 208–246 (ITERLILPRFCEMCCDCRMFHVRKVCAANFGDICSVVGQ), 248–285 (ATEEMLLPRFFQLCSDNVWGVRKACAECFMAVSCATCQ), and 287–324 (IRRTKLSALFINLISDPSRWVRQAAFQSLGPFISTFAN). Disordered stretches follow at residues 326–374 (SSSG…SVSN), 413–438 (ESHQEAASNENDKKPGNYKSMLRPEV), and 473–499 (EQNSGGKPSPEGPEEESEGPVPSSPNI). Basic and acidic residues predominate over residues 332 to 365 (FKEESKSSEEMSVENKNRTRDQEAPEDVQVRPED). 5 HEAT repeats span residues 505–542 (KELEEMIENLEPHIDDPDVKAQVEVLSAALRASSLDAH), 568–606 (INQEDSVPLISDAVENMDSTLHYIHSDSDLSNNSSFSPD), 698–734 (LTAADLVPIFNGFLKDLDEVRIGVLKHLHDFLKLLHI), 799–837 (WISYKLVSEMVKKLHAATPPTFGVDLINELVENFGRCPK), and 861–898 (QFAVHLMPHLLTLANDRVPNVRVLLAKTLRQTLLEKDY). Ser935 is modified (phosphoserine).

Serine/threonine-protein phosphatase 4 (PP4) occurs in different assemblies of the catalytic and one or more regulatory subunits. Component of the PP4 complex PPP4C-PPP4R1. Interacts with HDAC3. As to quaternary structure, (Microbial infection) Interacts with merkel polyomavirus small tumor antigen; this interaction bridges small tumor antigen with NEMO to inhibit NF-kappa-B. As to expression, widely expressed with high expression in cultured mesangial cells. Isoform 1 and isoform 2 are expressed in renal tissues.

Its function is as follows. Regulatory subunit of serine/threonine-protein phosphatase 4. May play a role in regulation of cell division in renal glomeruli. The PPP4C-PPP4R1 PP4 complex may play a role in dephosphorylation and regulation of HDAC3. Plays a role in the inhibition of TNF-induced NF-kappa-B activation by regulating the dephosphorylation of TRAF2. Functionally, (Microbial infection) Participates in merkel polyomavirus-mediated inhibition of NF-kappa-B by bridging viral small tumor antigen with NEMO. This Homo sapiens (Human) protein is Serine/threonine-protein phosphatase 4 regulatory subunit 1 (PPP4R1).